A 177-amino-acid polypeptide reads, in one-letter code: tRNA (cytidine(56)-2'-O)-methyltransferase (177 aa).

Residues Leu-84 and 109–113 (GAEKV) contribute to the S-adenosyl-L-methionine site.

The protein belongs to the aTrm56 family. Homodimer.

Its subcellular location is the cytoplasm. It carries out the reaction cytidine(56) in tRNA + S-adenosyl-L-methionine = 2'-O-methylcytidine(56) in tRNA + S-adenosyl-L-homocysteine + H(+). Its function is as follows. Specifically catalyzes the AdoMet-dependent 2'-O-ribose methylation of cytidine at position 56 in tRNAs. The polypeptide is tRNA (cytidine(56)-2'-O)-methyltransferase (Methanosarcina barkeri (strain Fusaro / DSM 804)).